Here is a 224-residue protein sequence, read N- to C-terminus: Dehydration-responsive element-binding protein 1G (224 aa).

The segment covering 1–16 has biased composition (polar residues); it reads MDVSAALSSDYSSGTP. The segment at 1–46 is disordered; the sequence is MDVSAALSSDYSSGTPSPVAADADDGSSAYMTVSSAPPKRRAGRTK. The AP2/ERF DNA-binding region spans 54–111; the sequence is VFKGVRRRNPGRWVCEVREPHGKQRIWLGTFETAEMAARAHDVAALALRGRAACLNFA.

The protein belongs to the AP2/ERF transcription factor family. ERF subfamily.

It is found in the nucleus. In terms of biological role, transcriptional activator that binds specifically to the DNA sequence 5'-[AG]CCGAC-3'. Binding to the C-repeat/DRE element mediates high salinity- and dehydration-inducible transcription. This Oryza sativa subsp. indica (Rice) protein is Dehydration-responsive element-binding protein 1G (DREB1G).